The chain runs to 89 residues: Probable Fe(2+)-trafficking protein (89 aa).

It belongs to the Fe(2+)-trafficking protein family.

In terms of biological role, could be a mediator in iron transactions between iron acquisition and iron-requiring processes, such as synthesis and/or repair of Fe-S clusters in biosynthetic enzymes. The chain is Probable Fe(2+)-trafficking protein from Hahella chejuensis (strain KCTC 2396).